Consider the following 305-residue polypeptide: Pseudouridine-5'-phosphate glycosidase (305 aa).

E28 acts as the Proton donor in catalysis. Substrate contacts are provided by K89 and V109. D141 provides a ligand contact to Mn(2+). S143–D145 serves as a coordination point for substrate. Catalysis depends on K162, which acts as the Nucleophile.

The protein belongs to the pseudouridine-5'-phosphate glycosidase family. In terms of assembly, homotrimer. Mn(2+) is required as a cofactor.

It carries out the reaction D-ribose 5-phosphate + uracil = psi-UMP + H2O. Its function is as follows. Catalyzes the reversible cleavage of pseudouridine 5'-phosphate (PsiMP) to ribose 5-phosphate and uracil. Functions biologically in the cleavage direction, as part of a pseudouridine degradation pathway. The protein is Pseudouridine-5'-phosphate glycosidase of Dinoroseobacter shibae (strain DSM 16493 / NCIMB 14021 / DFL 12).